Reading from the N-terminus, the 238-residue chain is Protein G1-like8 (238 aa).

2 disordered regions span residues 1–33 and 147–238; these read MEGG…RYES and KARG…ATRV. The span at 10–27 shows a compositional bias: low complexity; that stretch reads GQAQPVAQAPPAMQPMQQ. An ALOG domain is found at 30-157; sequence RYESQKRRDW…ARGIPYEKKK (128 aa). The short motif at 155 to 159 is the Nuclear localization signal element; it reads KKKRK. Positions 165-176 are enriched in pro residues; the sequence is QPPPPPPPPPQH. Low complexity-rich tracts occupy residues 177 to 213 and 222 to 238; these read QPGA…ATSQ and TTTT…ATRV.

The protein belongs to the plant homeotic and developmental regulators ALOG protein family.

It is found in the nucleus. In terms of biological role, probable transcription regulator that acts as a developmental regulator by promoting cell growth in response to light. The protein is Protein G1-like8 (G1L8) of Oryza sativa subsp. japonica (Rice).